The chain runs to 241 residues: Beta-nerve growth factor (241 aa).

Positions Met-1–Ala-18 are cleaved as a signal peptide. The propeptide occupies Glu-19 to Arg-121. N-linked (GlcNAc...) asparagine glycosylation is found at Asn-69, Asn-114, and Asn-166. Disulfide bonds link Cys-136–Cys-201, Cys-179–Cys-229, and Cys-189–Cys-231.

It belongs to the NGF-beta family. In terms of assembly, homodimer. The homodimer interacts with a single NTRK1 chain. The homodimer interacts with a single NGFR chain. The NGF dimer interacts with a single SORCS2 chain (via extracellular domain). The NGF precursor (proNGF) binds to a receptor complex formed by SORT1 and NGFR, which leads to NGF endocytosis. Both mature NGF and the immature NGF precursor (proNGF) interact with SORCS2 and with the heterodimer formed by SORCS2 and NGFR (via extracellular domains). The NGF precursor (proNGF) has much higher affinity for SORCS2 than mature NGF. The NGF precursor (proNGF) has much higher affinity for SORT1 than mature NGF. Interacts with ADAM10 in a divalent cation-dependent manner. Interacts with SORCS3.

It is found in the secreted. The protein resides in the endosome lumen. Functionally, nerve growth factor is important for the development and maintenance of the sympathetic and sensory nervous systems. Extracellular ligand for the NTRK1 and NGFR receptors, activates cellular signaling cascades through those receptor tyrosine kinase to regulate neuronal proliferation, differentiation and survival. Inhibits metalloproteinase dependent proteolysis of platelet glycoprotein VI. The sequence is that of Beta-nerve growth factor (NGF) from Saimiri boliviensis boliviensis (Bolivian squirrel monkey).